The chain runs to 143 residues: Large ribosomal subunit protein uL11 (143 aa).

Belongs to the universal ribosomal protein uL11 family. Part of the ribosomal stalk of the 50S ribosomal subunit. Interacts with L10 and the large rRNA to form the base of the stalk. L10 forms an elongated spine to which L12 dimers bind in a sequential fashion forming a multimeric L10(L12)X complex. In terms of processing, one or more lysine residues are methylated.

Forms part of the ribosomal stalk which helps the ribosome interact with GTP-bound translation factors. This chain is Large ribosomal subunit protein uL11, found in Zymomonas mobilis subsp. mobilis (strain ATCC 31821 / ZM4 / CP4).